Consider the following 237-residue polypeptide: Casparian strip membrane protein 2 (237 aa).

A disordered region spans residues 1–48 (MSGSDTSGSVHVDEHGHGHGKASSSYDGAGAPAPAPAPFQGHRKAGSG). At 1 to 69 (MSGSDTSGSV…GSGGDGLRRC (69 aa)) the chain is on the cytoplasmic side. A helical membrane pass occupies residues 70–90 (LGLIDFVLRVAAFGPTLAAAI). Residues 91 to 117 (SIGTSDERLSVFTNYFQFRARFDDFPA) are Extracellular-facing. Residues 118-138 (FEFFIVANAIAAGYMVLSLPF) traverse the membrane as a helical segment. The Cytoplasmic segment spans residues 139 to 152 (SAATIMSSKATGVK). Residues 153 to 173 (LLLLICDTIMVGLLTAAASAA) form a helical membrane-spanning segment. Over 174-205 (AAMVYVAHEGNLRANWVPICLQFHGFCQRTSG) the chain is Extracellular. The chain crosses the membrane as a helical span at residues 206 to 226 (AVIASFLAVFVLMVLIVMAAF). Topologically, residues 227 to 237 (TMPRRTHHTAS) are cytoplasmic.

This sequence belongs to the Casparian strip membrane proteins (CASP) family. In terms of assembly, homodimer and heterodimers.

Its subcellular location is the cell membrane. In terms of biological role, regulates membrane-cell wall junctions and localized cell wall deposition. Required for establishment of the Casparian strip membrane domain (CSD) and the subsequent formation of Casparian strips, a cell wall modification of the root endodermis that determines an apoplastic barrier between the intraorganismal apoplasm and the extraorganismal apoplasm and prevents lateral diffusion. The chain is Casparian strip membrane protein 2 from Oryza sativa subsp. japonica (Rice).